Consider the following 342-residue polypeptide: Endo-1,4-beta-xylanase A (342 aa).

Residues glutamate 11 to phenylalanine 342 enclose the GH10 domain. Glutamate 144 functions as the Proton donor in the catalytic mechanism. The active-site Nucleophile is glutamate 252.

This sequence belongs to the glycosyl hydrolase 10 (cellulase F) family. Cytoplasmic xylanase subfamily.

It localises to the cytoplasm. The catalysed reaction is Endohydrolysis of (1-&gt;4)-beta-D-xylosidic linkages in xylans.. It participates in glycan degradation; xylan degradation. This is Endo-1,4-beta-xylanase A (xynA) from Caldicellulosiruptor saccharolyticus (Caldocellum saccharolyticum).